Reading from the N-terminus, the 854-residue chain is DNA mismatch repair protein MutS (854 aa).

Residue 615–622 (GPNMGGKS) coordinates ATP.

Belongs to the DNA mismatch repair MutS family.

Functionally, this protein is involved in the repair of mismatches in DNA. It is possible that it carries out the mismatch recognition step. This protein has a weak ATPase activity. This chain is DNA mismatch repair protein MutS, found in Proteus mirabilis (strain HI4320).